The sequence spans 193 residues: uncharacterized protein (193 aa).

The chain crosses the membrane as a helical span at residues tryptophan 153–tyrosine 170.

Its subcellular location is the membrane. This is an uncharacterized protein from Invertebrate iridescent virus 6 (IIV-6).